The primary structure comprises 285 residues: MGAITLDGKATRDEIFVDLKERVAALTEQGRTPGLGTVLVGDDPGSQAYVRGKHSDCAKVGINSIRRDLPADISQAELDATIDELNANPECTGYIVQLPLPKHLDENAALERIDPGKDADGLHPTNLGRLVLNEPAPLPCTPRGIVHLLRRYEVEIAGAHVVVIGRGVTVGRPLGLLLTRRSENATVTLCHTATRHLPQFTREADIIVAAAGVPHMVTAEMVRPGAAVIDVGVSRDDNGKLVGDVAPDVWEVAGHVSPNPGGVGPLTRAFLLTNVVERAEALARG.

NADP(+)-binding positions include 165 to 167 (GRG), T192, and V233.

Belongs to the tetrahydrofolate dehydrogenase/cyclohydrolase family. In terms of assembly, homodimer.

It catalyses the reaction (6R)-5,10-methylene-5,6,7,8-tetrahydrofolate + NADP(+) = (6R)-5,10-methenyltetrahydrofolate + NADPH. It carries out the reaction (6R)-5,10-methenyltetrahydrofolate + H2O = (6R)-10-formyltetrahydrofolate + H(+). The protein operates within one-carbon metabolism; tetrahydrofolate interconversion. Functionally, catalyzes the oxidation of 5,10-methylenetetrahydrofolate to 5,10-methenyltetrahydrofolate and then the hydrolysis of 5,10-methenyltetrahydrofolate to 10-formyltetrahydrofolate. The polypeptide is Bifunctional protein FolD (Mycobacterium sp. (strain MCS)).